The chain runs to 429 residues: Palmitoyltransferase SWF1 (429 aa).

Residues 1–3 are Lumenal-facing; it reads MGT. The helical transmembrane segment at 4–24 threads the bilayer; sequence IAIIAAVILGISFMTFVAFFG. At 25–79 the chain is on the cytoplasmic side; that stretch reads RLPALRNTPISFLHRLIWIHLPNGILTVDRTLTNGRLTTSLTRLGRHLWYDQHPT. The chain crosses the membrane as a helical span at residues 80 to 100; that stretch reads ILIFFFLLLSVGEYLYLPVAW. Topologically, residues 101–112 are lumenal; that stretch reads PHFSFTHKFFGT. A helical membrane pass occupies residues 113–133; the sequence is IAILCPYIFLYLSAYTDPGVI. The Cytoplasmic segment spans residues 134 to 201; the sequence is NAKTHVREMA…CVGANNQRWF (68 aa). The DHHC domain maps to 156-206; that stretch reads TSCETCHLLKPARSKHCSICKKCVGRMDHHCIFINNCVGANNQRWFILLLL. The chain crosses the membrane as a helical span at residues 202-222; it reads ILLLLSTAILTLYGGVLGLVI. Over 223 to 274 the chain is Lumenal; that stretch reads IRAKIQARFPYWTLMPWWTSTQAWNSGDLDFHRWLLLWSWGLQSGVAMGGVT. The helical transmembrane segment at 275–295 threads the bilayer; that stretch reads LLALLTTPLVWGLLGYHLWLV. At 296–429 the chain is on the cytoplasmic side; it reads YCGTTTNESM…ERGRNRRRSS (134 aa). Over residues 408–421 the composition is skewed to basic and acidic residues; sequence GRSPVDEREFGRER. Residues 408–429 are disordered; it reads GRSPVDEREFGRERGRNRRRSS.

This sequence belongs to the DHHC palmitoyltransferase family. SWF1 subfamily.

It localises to the endoplasmic reticulum membrane. It catalyses the reaction L-cysteinyl-[protein] + hexadecanoyl-CoA = S-hexadecanoyl-L-cysteinyl-[protein] + CoA. Its function is as follows. Palmitoyltransferase that targets several endosomal SNAREs. Palmitoylates the SNAREs at cysteine residues close to the cytoplasmic end of their transmembrane domain. May have a role in the cellular quality control of transmembrane domain-containing proteins. This chain is Palmitoyltransferase SWF1 (swf-1), found in Neurospora crassa (strain ATCC 24698 / 74-OR23-1A / CBS 708.71 / DSM 1257 / FGSC 987).